The sequence spans 1072 residues: Zinc finger MIZ domain-containing protein 1 (1072 aa).

Positions 1–120 are sufficient for transactivation activity; sufficient for interaction with NOTCH1; sequence MNSMDRHIQQ…HQKSRQNDPP (120 aa). K91 is covalently cross-linked (Glycyl lysine isopeptide (Lys-Gly) (interchain with G-Cter in SUMO2)). 2 disordered regions span residues 112-141 and 362-538; these read QKSRQNDPPGKLPMQPPLSSMSSMKPTLSH and TPSG…PYLS. Residues 128-141 are compositionally biased toward low complexity; it reads PLSSMSSMKPTLSH. Residues 419–436 show a composition bias toward polar residues; sequence YGNQQYGPNSQFPTQPGQ. Positions 437-446 are enriched in pro residues; sequence YPTPNPPRPL. The span at 489 to 501 shows a compositional bias: low complexity; sequence SSGSSYSSYSQGS. Positions 517 to 528 are enriched in pro residues; it reads SPVPGNPTPPMT. The SP-RING-type zinc-finger motif lies at 734–815; it reads GEDGVEQTAI…MWGILNAIQH (82 aa). Zn(2+) is bound by residues C765, H767, C788, and C791. Glycyl lysine isopeptide (Lys-Gly) (interchain with G-Cter in SUMO2) cross-links involve residues K841 and K850. The transactivation domain stretch occupies residues 844–1072; that stretch reads PDGIPSKRFK…DDLLSLFENN (229 aa). Pro residues predominate over residues 875-886; it reads GPSPYPLPPPPG. The disordered stretch occupies residues 875 to 1072; it reads GPSPYPLPPP…DDLLSLFENN (198 aa). Polar residues-rich tracts occupy residues 888 to 902 and 958 to 968; these read TSSNDYSSQGNNYQG and SSDQPHPSIQQ. The span at 988-1001 shows a compositional bias: pro residues; the sequence is APPPSQPPRQPPQA. Positions 1045 to 1072 are enriched in low complexity; sequence PDELLSYLDPPDLPSNSNDDLLSLFENN.

Interacts with AR, but not with ESR1, NR3C1, PGR, THRB nor VDR. Interacts with NOTCH1 and RBPJ. Interacts with SMARCA4. Interacts (via SP-RING-type domain) with SMAD3 and SMAD4 (via MH2 domain). Expressed in brain.

The protein resides in the nucleus. It localises to the nucleoplasm. The protein localises to the cytoplasm. Functionally, acts as a transcriptional coactivator. Increases ligand-dependent transcriptional activity of AR and promotes AR sumoylation. The stimulation of AR activity is dependent upon sumoylation. Also functions as a transcriptional coactivator in the TGF-beta signaling pathway by increasing the activity of the SMAD3/SMAD4 transcriptional complex. Involved in transcriptional activation of a subset of NOTCH1 target genes including MYC. Involved in thymocyte and T cell development. Involved in the regulation of postmitotic positioning of pyramidal neurons in the developing cerebral cortex. In Mus musculus (Mouse), this protein is Zinc finger MIZ domain-containing protein 1 (Zmiz1).